The chain runs to 282 residues: Elongation factor Ts (282 aa).

Positions 79 to 82 are involved in Mg(2+) ion dislocation from EF-Tu; sequence TDFV.

Belongs to the EF-Ts family.

It localises to the cytoplasm. Associates with the EF-Tu.GDP complex and induces the exchange of GDP to GTP. It remains bound to the aminoacyl-tRNA.EF-Tu.GTP complex up to the GTP hydrolysis stage on the ribosome. This is Elongation factor Ts from Shewanella loihica (strain ATCC BAA-1088 / PV-4).